Reading from the N-terminus, the 127-residue chain is Protein LLP homolog (127 aa).

Basic residues predominate over residues 1–21 (MAKSLRSKWKRKMRAEKRKKN). The tract at residues 1-24 (MAKSLRSKWKRKMRAEKRKKNAPK) is disordered. Glycyl lysine isopeptide (Lys-Gly) (interchain with G-Cter in SUMO2) cross-links involve residues lysine 65 and lysine 72. Residues 98-120 (RQRKRLKAKRERKKGKSKVKAMK) show a composition bias toward basic residues. The disordered stretch occupies residues 98 to 127 (RQRKRLKAKRERKKGKSKVKAMKAAKGLTW).

Belongs to the learning-associated protein family. As to quaternary structure, interacts with CTCF, MYO1C and with the transcriptional machinery, including RNA polymerase II and TBP.

The protein localises to the nucleus. It is found in the nucleolus. It localises to the chromosome. In terms of biological role, in hippocampal neurons, regulates dendritic and spine growth and synaptic transmission. This Bos taurus (Bovine) protein is Protein LLP homolog (LLPH).